A 301-amino-acid chain; its full sequence is MNILILSRNSRLYSTRRLVEAGRERGHQVRVVDPLRCYMNISPHKPEIHYKGETLENFDGVIPRIGASITFYGTAVLRQFEIMGTFPLNESVAISRSRDKLRSTQLLARKGIGLPMTTFGYSPDDTEDLINLVGGPPMVIKLLEGTQGKGVVLAETQQAAESLIDAFRGLNVHFLAQEYIKEAGGSDIRCFVVGERVVASMRRQAKEGEFRSNIHRGGQASTVRITPEERSMAVRAARIMGLNVAGVDLIRSAHGSLVLEVNSSPGLEGIEKATGKDIAGTIYAFLEKNARQGKTRTRGRG.

In terms of domain architecture, ATP-grasp spans 104–287; the sequence is TQLLARKGIG…IAGTIYAFLE (184 aa). ATP is bound by residues Lys-141, 178-179, Asp-187, and 211-213; these read EY and RSN. Residues Asp-248, Glu-260, and Asn-262 each contribute to the Mg(2+) site. Positions 248, 260, and 262 each coordinate Mn(2+).

The protein belongs to the RimK family. The cofactor is Mg(2+). It depends on Mn(2+) as a cofactor.

This Alkalilimnicola ehrlichii (strain ATCC BAA-1101 / DSM 17681 / MLHE-1) protein is Probable alpha-L-glutamate ligase.